We begin with the raw amino-acid sequence, 223 residues long: Sigma non-opioid intracellular receptor 1 (223 aa).

At 1 to 9 (MQWALGRRW) the chain is on the lumenal side. Positions 2-8 (QWALGRR) are targeting to endoplasmic reticulum-associated lipid droplets. Residues 10–30 (VWAALLLAAAAVLTQVVWLWL) form a helical membrane-spanning segment. The Cytoplasmic portion of the chain corresponds to 31–223 (GTQSFVFQHE…FTTYLFGQDS (193 aa)). Positions 99–106 (SLSEYVLL) are important for ligand-binding. Positions 177 to 223 (VIPSTLAFALADTIFSTQDFLTLFYTLRAYARGLRLEFTTYLFGQDS) are C-terminal hydrophobic region.

The protein belongs to the ERG2 family. As to quaternary structure, homotrimer. Forms a ternary complex with ANK2 and ITPR3. The complex is disrupted by agonists. Interacts with KCNA4. Interacts with KCNA2; cocaine consumption leads to increased interaction. Interacts with RNF112 in an oxidative stress-regulated manner.

It is found in the nucleus inner membrane. The protein resides in the nucleus outer membrane. Its subcellular location is the nucleus envelope. The protein localises to the cytoplasmic vesicle. It localises to the endoplasmic reticulum membrane. It is found in the membrane. The protein resides in the lipid droplet. Its subcellular location is the cell junction. The protein localises to the cell membrane. It localises to the cell projection. It is found in the growth cone. The protein resides in the postsynaptic density membrane. Its function is as follows. Functions in lipid transport from the endoplasmic reticulum and is involved in a wide array of cellular functions probably through regulation of the biogenesis of lipid microdomains at the plasma membrane. Involved in the regulation of different receptors it plays a role in BDNF signaling and EGF signaling. Also regulates ion channels like the potassium channel and could modulate neurotransmitter release. Plays a role in calcium signaling through modulation together with ANK2 of the ITP3R-dependent calcium efflux at the endoplasmic reticulum. Plays a role in several other cell functions including proliferation, survival and death. Originally identified for its ability to bind various psychoactive drugs it is involved in learning processes, memory and mood alteration. Necessary for proper mitochondrial axonal transport in motor neurons, in particular the retrograde movement of mitochondria. Plays a role in protecting cells against oxidative stress-induced cell death via its interaction with RNF112. This is Sigma non-opioid intracellular receptor 1 (SIGMAR1) from Mustela erminea (Ermine).